A 689-amino-acid polypeptide reads, in one-letter code: Glycine--tRNA ligase beta subunit (689 aa).

It belongs to the class-II aminoacyl-tRNA synthetase family. As to quaternary structure, tetramer of two alpha and two beta subunits.

It localises to the cytoplasm. The catalysed reaction is tRNA(Gly) + glycine + ATP = glycyl-tRNA(Gly) + AMP + diphosphate. The protein is Glycine--tRNA ligase beta subunit of Coxiella burnetii (strain RSA 331 / Henzerling II).